A 331-amino-acid polypeptide reads, in one-letter code: Olfactory receptor 6K3 (331 aa).

Topologically, residues 1 to 41 (MCWTMPSPFTGSSTRNMESGNQSTVTEFIFTGFPQLQDGSL) are extracellular. An N-linked (GlcNAc...) asparagine glycan is attached at Asn21. A helical transmembrane segment spans residues 42-62 (LYFFPLLFIYTFIIIDNLLIF). Over 63-70 (SAVRLDTH) the chain is Cytoplasmic. The helical transmembrane segment at 71–91 (LHNPMYNFISIFSFLEIWYTT) threads the bilayer. Residues 92-115 (ATIPKMLSNLISEKKAISMTGCIL) lie on the Extracellular side of the membrane. Cys113 and Cys205 are oxidised to a cystine. Residues 116 to 136 (QMYFFHSLENSEGILLTTMAI) traverse the membrane as a helical segment. Residues 137-155 (DRYVAICNPLRYQMIMTPR) are Cytoplasmic-facing. A helical transmembrane segment spans residues 156-176 (LCAQLSAGSCLFGFLILLPEI). The Extracellular segment spans residues 177-212 (VMISTLPFCGPNQIHQIFCDLVPVLSLACTDTSMIL). Residues 213 to 232 (IEDVIHAVTIIITFLIIALS) form a helical membrane-spanning segment. Topologically, residues 233–252 (YVRIVTVILRIPSSEGRQKA) are cytoplasmic. Residues 253–273 (FSTCAGHLMVFPIFFGSVSLM) form a helical membrane-spanning segment. The Extracellular portion of the chain corresponds to 274 to 286 (YLRFSDTYPPVLD). The helical transmembrane segment at 287-307 (TAIALMFTVLAPFFNPIIYSL) threads the bilayer. Residues 308–331 (RNKDMNNAIKKLFCLQKVLNKPGG) are Cytoplasmic-facing.

The protein belongs to the G-protein coupled receptor 1 family.

It is found in the cell membrane. Functionally, odorant receptor. In Homo sapiens (Human), this protein is Olfactory receptor 6K3 (OR6K3).